Consider the following 915-residue polypeptide: Coiled-coil domain-containing protein 57 (915 aa).

Residues 1 to 502 (MLPLGSEPAL…MHGLPRPGAQ (502 aa)) are centrosomal targeting domain. 4 coiled-coil regions span residues 92-173 (VSEL…QRQE), 214-422 (LEAL…LERD), 456-483 (KSQV…VTLE), and 521-548 (IQRL…LSHQ). Disordered regions lie at residues 555–574 (TAAE…GDAA), 606–653 (PLKM…QAGP), and 724–915 (QHGG…NIMD). The tract at residues 606 to 915 (PLKMSSPHAE…PKIRNYNIMD (310 aa)) is microtubule binding domain. The segment covering 613–627 (HAESQPSVRTSTETT) has biased composition (polar residues). A compositionally biased stretch (low complexity) spans 628 to 652 (GGSAQAGQAGGSVQAGQAGGSVQAG). Positions 745–758 (GREDAKSAEDEAPS) are enriched in basic and acidic residues. 3 stretches are compositionally biased toward polar residues: residues 781–794 (PKTQ…TCKS), 819–830 (SHSSSSFASGTL), and 841–852 (SSPSGVTSQGDS). Low complexity predominate over residues 879 to 891 (KTAAQAKAKTTGA).

As to quaternary structure, interacts with CEP63; the interaction is required for their location to proximal end of centrioles. Interacts with microtubules.

The protein localises to the cytoplasm. It localises to the cytoskeleton. It is found in the microtubule organizing center. Its subcellular location is the centrosome. The protein resides in the centriolar satellite. The protein localises to the centriole. It localises to the spindle. Functionally, pleiotropic regulator of centriole duplication, mitosis, and ciliogenesis. Critical interface between centrosome and microtubule-mediated cellular processes. Centriole duplication protein required for recruitment of CEP63, CEP152, and PLK4 to the centrosome. Independent of its centrosomal targeting, localizes to and interacts with microtubules and regulates microtubule nucleation, stability, and mitotic progression. This is Coiled-coil domain-containing protein 57 from Homo sapiens (Human).